The primary structure comprises 614 residues: Syringomycin synthase SyrB1 (614 aa).

Residues 535 to 610 (KGLSEQEHFV…VLADHITRSL (76 aa)) form the Carrier domain. S570 is modified (O-(pantetheine 4'-phosphoryl)serine).

This sequence belongs to the ATP-dependent AMP-binding enzyme family. Requires pantetheine 4'-phosphate as cofactor.

It catalyses the reaction holo-[peptidyl-carrier protein] + L-threonine + ATP = L-threonyl-[peptidyl-carrier protein] + AMP + diphosphate. Functionally, involved in the biosynthesis of syringomycin E, a cyclic lipodepsinonapeptide toxin with phytotoxic activity. Specifically adenylates L-threonine and loads it onto its peptidyl carrier domain, via a thioester linkage to the phosphopanthetheine moiety. Is highly specific for L-threonine. The protein is Syringomycin synthase SyrB1 of Pseudomonas syringae pv. syringae.